Here is a 602-residue protein sequence, read N- to C-terminus: Elongation factor 4 (602 aa).

Residues 7–188 (ENIRNFSIIA…AIIELIPPPK (182 aa)) form the tr-type G domain. Residues 19 to 24 (DHGKST) and 135 to 138 (NKID) contribute to the GTP site.

This sequence belongs to the TRAFAC class translation factor GTPase superfamily. Classic translation factor GTPase family. LepA subfamily.

It is found in the cell inner membrane. The catalysed reaction is GTP + H2O = GDP + phosphate + H(+). Functionally, required for accurate and efficient protein synthesis under certain stress conditions. May act as a fidelity factor of the translation reaction, by catalyzing a one-codon backward translocation of tRNAs on improperly translocated ribosomes. Back-translocation proceeds from a post-translocation (POST) complex to a pre-translocation (PRE) complex, thus giving elongation factor G a second chance to translocate the tRNAs correctly. Binds to ribosomes in a GTP-dependent manner. The protein is Elongation factor 4 of Chlamydia caviae (strain ATCC VR-813 / DSM 19441 / 03DC25 / GPIC) (Chlamydophila caviae).